A 127-amino-acid polypeptide reads, in one-letter code: MLQLLLAVFIGGGTGSVARWLLSMRFNPLHQAIPLGTLAANLIGAFIIGMGFAWFSRMTNIDPVWKVLITTGFCGGLTTFSTFSAEVVFLLQEGRFGWALLNVFVNLLGSFAMTALAFWLFSASTTH.

A run of 4 helical transmembrane segments spans residues 4–24 (LLLA…LLSM), 35–55 (LGTL…FAWF), 71–91 (TGFC…VFLL), and 103–123 (VFVN…LFSA). Na(+)-binding residues include G75 and T78.

It belongs to the fluoride channel Fluc/FEX (TC 1.A.43) family.

It localises to the cell inner membrane. The enzyme catalyses fluoride(in) = fluoride(out). Na(+) is not transported, but it plays an essential structural role and its presence is essential for fluoride channel function. In terms of biological role, fluoride-specific ion channel. Important for reducing fluoride concentration in the cell, thus reducing its toxicity. The protein is Fluoride-specific ion channel FluC of Escherichia coli O81 (strain ED1a).